The following is a 217-amino-acid chain: Outer-membrane lipoprotein LolB (217 aa).

An N-terminal signal peptide occupies residues 1 to 20 (MSRAVRTLALGGLVLVGLSA). C21 is lipidated: N-palmitoyl cysteine. Residue C21 is the site of S-diacylglycerol cysteine attachment.

This sequence belongs to the LolB family. As to quaternary structure, monomer.

The protein resides in the cell outer membrane. Functionally, plays a critical role in the incorporation of lipoproteins in the outer membrane after they are released by the LolA protein. The protein is Outer-membrane lipoprotein LolB of Xanthomonas euvesicatoria pv. vesicatoria (strain 85-10) (Xanthomonas campestris pv. vesicatoria).